Consider the following 433-residue polypeptide: D-amino acid dehydrogenase (433 aa).

3-17 contributes to the FAD binding site; it reads VLVLGSGVIGTTSAY.

Belongs to the DadA oxidoreductase family. It depends on FAD as a cofactor.

The enzyme catalyses a D-alpha-amino acid + A + H2O = a 2-oxocarboxylate + AH2 + NH4(+). It participates in amino-acid degradation; D-alanine degradation; NH(3) and pyruvate from D-alanine: step 1/1. Functionally, oxidative deamination of D-amino acids. This chain is D-amino acid dehydrogenase, found in Pseudomonas savastanoi pv. phaseolicola (strain 1448A / Race 6) (Pseudomonas syringae pv. phaseolicola (strain 1448A / Race 6)).